Here is a 295-residue protein sequence, read N- to C-terminus: Small ribosomal subunit protein uS2 (295 aa).

The tract at residues 247-295 is disordered; it reads TDKGLTSKNVSKLKQTKKFSKTKNIDEETNTEFEQALNDADENKNSDNA.

It belongs to the universal ribosomal protein uS2 family.

The protein is Small ribosomal subunit protein uS2 of Rickettsia conorii (strain ATCC VR-613 / Malish 7).